Consider the following 444-residue polypeptide: Methylenetetrahydrofolate--tRNA-(uracil-5-)-methyltransferase TrmFO (444 aa).

Gly-10–Gly-15 is a binding site for FAD.

The protein belongs to the MnmG family. TrmFO subfamily. FAD serves as cofactor.

It is found in the cytoplasm. The enzyme catalyses uridine(54) in tRNA + (6R)-5,10-methylene-5,6,7,8-tetrahydrofolate + NADH + H(+) = 5-methyluridine(54) in tRNA + (6S)-5,6,7,8-tetrahydrofolate + NAD(+). The catalysed reaction is uridine(54) in tRNA + (6R)-5,10-methylene-5,6,7,8-tetrahydrofolate + NADPH + H(+) = 5-methyluridine(54) in tRNA + (6S)-5,6,7,8-tetrahydrofolate + NADP(+). Catalyzes the folate-dependent formation of 5-methyl-uridine at position 54 (M-5-U54) in all tRNAs. The protein is Methylenetetrahydrofolate--tRNA-(uracil-5-)-methyltransferase TrmFO of Streptococcus gordonii (strain Challis / ATCC 35105 / BCRC 15272 / CH1 / DL1 / V288).